Reading from the N-terminus, the 59-residue chain is KVHGSLARAGKVRGQTPKVAKQEKKKKKTGRAKRRMQYNRRFVNVVPTFGKKKGPNANS.

Residues 1-35 (KVHGSLARAGKVRGQTPKVAKQEKKKKKTGRAKRR) form a disordered region. The span at 23 to 35 (EKKKKKTGRAKRR) shows a compositional bias: basic residues. N6-succinyllysine is present on Lys-51.

It belongs to the eukaryotic ribosomal protein eS30 family.

The protein is Small ribosomal subunit protein eS30 (Fau) of Mus spicilegus (Steppe mouse).